Consider the following 579-residue polypeptide: Fatty-acid amide hydrolase 1 (579 aa).

A helical transmembrane segment spans residues 9–29; it reads AFSGPSGVALACCLVAAALAL. At 30–403 the chain is on the cytoplasmic side; the sequence is RWSSRRMARG…GDYVDSCLGD (374 aa). Lys142 serves as the catalytic Charge relay system. Substrate contacts are provided by residues Met191, Ser217, and 238-241; that span reads IGGS. Catalysis depends on Ser217, which acts as the Charge relay system. Ser241 serves as the catalytic Acyl-ester intermediate. Residue Ser241 is modified to Phosphoserine. An intramembrane segment occupies 404 to 433; the sequence is LISILRLPKWLKGLLAFMLRPLLPRLAGFL. Over 434–579 the chain is Cytoplasmic; sequence SSLRPRSAGK…RLMAPGRQPS (146 aa).

It belongs to the amidase family. Homodimer.

The protein localises to the endoplasmic reticulum membrane. The protein resides in the golgi apparatus membrane. It catalyses the reaction N-(5Z,8Z,11Z,14Z-eicosatetraenoyl)-ethanolamine + H2O = ethanolamine + (5Z,8Z,11Z,14Z)-eicosatetraenoate. It carries out the reaction (9Z)-octadecenamide + H2O = (9Z)-octadecenoate + NH4(+). The catalysed reaction is 2-(5Z,8Z,11Z,14Z-eicosatetraenoyl)-glycerol + H2O = glycerol + (5Z,8Z,11Z,14Z)-eicosatetraenoate + H(+). The enzyme catalyses 1-O-methyl-(5Z,8Z,11Z,14Z)-eicosatetraenoate + H2O = methanol + (5Z,8Z,11Z,14Z)-eicosatetraenoate + H(+). It catalyses the reaction (9Z,12Z,15Z)-octadecatrienamide + H2O = (9Z,12Z,15Z)-octadecatrienoate + NH4(+). It carries out the reaction (5Z,8Z,11Z,14Z)-eicosatetraenamide + H2O = (5Z,8Z,11Z,14Z)-eicosatetraenoate + NH4(+). The catalysed reaction is (6Z)-octadecenamide + H2O = (6Z)-octadecenoate + NH4(+). The enzyme catalyses (15Z)-tetracosenamide + H2O = (15Z)-tetracosenoate + NH4(+). It catalyses the reaction (8Z,11Z,14Z)-eicosatrienamide + H2O = (8Z,11Z,14Z)-eicosatrienoate + NH4(+). It carries out the reaction (11Z,14Z,17Z)-eicosatrienamide + H2O = (11Z,14Z,17Z)-eicosatrienoate + NH4(+). The catalysed reaction is (11Z,14Z)-eicosadienamide + H2O = (11Z,14Z)-eicosadienoate + NH4(+). The enzyme catalyses (9Z,12Z)-octadecadienamide + H2O = (9Z,12Z)-octadecadienoate + NH4(+). It catalyses the reaction tetradecamide + H2O = tetradecanoate + NH4(+). It carries out the reaction N-(9Z-octadecenoyl) ethanolamine + H2O = ethanolamine + (9Z)-octadecenoate. The catalysed reaction is N-(9Z-octadecenoyl)-taurine + H2O = taurine + (9Z)-octadecenoate. The enzyme catalyses (11Z)-eicosenamide + H2O = (11Z)-eicosenoate + NH4(+). It catalyses the reaction N-(9Z-hexadecenoyl) ethanolamine + H2O = (9Z)-hexadecenoate + ethanolamine. It carries out the reaction N-octadecanoyl ethanolamine + H2O = octadecanoate + ethanolamine. The catalysed reaction is N-docosanoyl-ethanolamine + H2O = docosanoate + ethanolamine. The enzyme catalyses N-tetracosanoyl-taurine + H2O = tetracosanoate + taurine. It catalyses the reaction N-(15Z-tetracosenoyl)-ethanolamine + H2O = (15Z)-tetracosenoate + ethanolamine. It carries out the reaction N-docosanoyl-taurine + H2O = docosanoate + taurine. The catalysed reaction is N-(15Z-tetracosenoyl)-taurine + H2O = (15Z)-tetracosenoate + taurine. The enzyme catalyses N-tricosanoyl-taurine + H2O = tricosanoate + taurine. It catalyses the reaction (9Z)-octadecenoate + glycine = N-(9Z-octadecenoyl)glycine + H2O. It carries out the reaction N-(5Z,8Z,11Z,14Z)-eicosatetraenoyl-glycine + H2O = (5Z,8Z,11Z,14Z)-eicosatetraenoate + glycine. The catalysed reaction is N-(5Z,8Z,11Z,14Z-eicosatetraenoyl)-L-serine + H2O = (5Z,8Z,11Z,14Z)-eicosatetraenoate + L-serine. Its activity is regulated as follows. inhibited by trifluoromethyl ketone. Functionally, catalyzes the hydrolysis of endogenous amidated lipids like the sleep-inducing lipid oleamide ((9Z)-octadecenamide), the endocannabinoid anandamide (N-(5Z,8Z,11Z,14Z-eicosatetraenoyl)-ethanolamine), as well as other fatty amides, to their corresponding fatty acids, thereby regulating the signaling functions of these molecules. Also catalyzes the hydrolysis of the endocannabinoid 2-arachidonoylglycerol (2-(5Z,8Z,11Z,14Z-eicosatetraenoyl)-glycerol). FAAH cooperates with PM20D1 in the hydrolysis of amino acid-conjugated fatty acids such as N-fatty acyl glycine and N-fatty acyl-L-serine, thereby acting as a physiological regulator of specific subsets of intracellular, but not of extracellular, N-fatty acyl amino acids. This Sus scrofa (Pig) protein is Fatty-acid amide hydrolase 1 (FAAH).